Reading from the N-terminus, the 92-residue chain is Small ribosomal subunit protein uS19 (92 aa).

The protein belongs to the universal ribosomal protein uS19 family.

Its function is as follows. Protein S19 forms a complex with S13 that binds strongly to the 16S ribosomal RNA. This Prochlorococcus marinus (strain MIT 9301) protein is Small ribosomal subunit protein uS19.